A 212-amino-acid chain; its full sequence is Peptide methionine sulfoxide reductase MsrA (212 aa).

Cys51 is an active-site residue.

Belongs to the MsrA Met sulfoxide reductase family.

It carries out the reaction L-methionyl-[protein] + [thioredoxin]-disulfide + H2O = L-methionyl-(S)-S-oxide-[protein] + [thioredoxin]-dithiol. The catalysed reaction is [thioredoxin]-disulfide + L-methionine + H2O = L-methionine (S)-S-oxide + [thioredoxin]-dithiol. Functionally, has an important function as a repair enzyme for proteins that have been inactivated by oxidation. Catalyzes the reversible oxidation-reduction of methionine sulfoxide in proteins to methionine. The chain is Peptide methionine sulfoxide reductase MsrA from Vibrio cholerae serotype O1 (strain ATCC 39541 / Classical Ogawa 395 / O395).